The following is a 175-amino-acid chain: Calcineurin subunit B (175 aa).

EF-hand domains lie at 21–56, 60–88, 90–125, and 131–166; these read PELMRLKKRFMKLDKDGSGSIDKDEFLQIPQIANNP, RMIAIFDEDGSGTVDFQEFVGGLSAFSSK, GRDEKLRFAFKVYDMDRDGYISNGELYLVLKQMVGN, and QLQQIVDKTIMEADKDGDGKLSFEEFTQMVASTDIV. 20 residues coordinate Ca(2+): Asp34, Asp36, Ser38, Ser40, Glu45, Asp66, Asp68, Ser70, Thr72, Glu77, Asp103, Asp105, Asp107, Tyr109, Glu114, Asp144, Asp146, Asp148, Lys150, and Glu155.

This sequence belongs to the calcineurin regulatory subunit family. Composed of a catalytic subunit (A) and a regulatory subunit (B).

In terms of biological role, regulatory subunit of calcineurin, a calcium-dependent, calmodulin stimulated protein phosphatase. Confers calcium sensitivity. Plays a central role in virulence and antifungal drug action. This Cryptococcus neoformans var. neoformans serotype D (strain B-3501A) (Filobasidiella neoformans) protein is Calcineurin subunit B (CNB1).